The chain runs to 308 residues: Very-long-chain enoyl-CoA reductase (308 aa).

Residues 1 to 86 are Cytoplasmic-facing; sequence MKHYEVEILD…YFRDLGAQIS (86 aa). N6-acetyllysine is present on K22. Position 58 is a phosphoserine (S58). Position 60 is an N6-acetyllysine (K60). A helical membrane pass occupies residues 87 to 106; sequence WVTVFLTEYAGPLFIYLLFY. The Lumenal portion of the chain corresponds to 107 to 124; sequence FRVPFIYGHKYDFTSSRH. A helical membrane pass occupies residues 125–147; it reads TVVHLACICHSFHYIKRLLETLF. At 148–158 the chain is on the cytoplasmic side; that stretch reads VHRFSHGTMPL. Residues 159–180 traverse the membrane as a helical segment; sequence RNIFKNCTYYWGFAAWMAYYIN. Topologically, residues 181 to 189 are lumenal; sequence HPLYTPPTY. A helical membrane pass occupies residues 190 to 216; sequence GAQQVKLALAIFVICQLGNFSIHMALR. Residues 217-245 lie on the Cytoplasmic side of the membrane; sequence DLRPAGSKTRKIPYPTKNPFTWLFLLVSC. A helical transmembrane segment spans residues 246-262; that stretch reads PNYTYEVGSWIGFAIMT. The Lumenal segment spans residues 263-264; that stretch reads QC. Residues 265 to 292 form a helical membrane-spanning segment; sequence LPVALFSLVGFTQMTIWAKGKHRSYLKE. Topologically, residues 293-308 are cytoplasmic; it reads FRDYPPLRMPIIPFLL.

It belongs to the steroid 5-alpha reductase family. In terms of assembly, interacts with ELOVL1 and LASS2. Interacts with HACD1 and HACD2 (via the third lumenal loop), but not with HACD3 and HACD4. Interacts with ELOVL1, ELOVL2, ELOVL3, ELOVL5 and ELOVL7 in the presence of acyl-CoA; interaction with HACD1/2 and that with ELOVLs are mutually exclusive. Glycosylated. In terms of tissue distribution, expressed in most tissues tested. Highly expressed in skeletal muscle.

The protein resides in the endoplasmic reticulum membrane. It carries out the reaction a very-long-chain 2,3-saturated fatty acyl-CoA + NADP(+) = a very-long-chain (2E)-enoyl-CoA + NADPH + H(+). The enzyme catalyses octadecanoyl-CoA + NADP(+) = (2E)-octadecenoyl-CoA + NADPH + H(+). The catalysed reaction is (2E,7Z,10Z,13Z,16Z)-docosapentaenoyl-CoA + NADPH + H(+) = (7Z,10Z,13Z,16Z)-docosatetraenoyl-CoA + NADP(+). It catalyses the reaction (2E,7Z,10Z,13Z,16Z,19Z)-docosahexaenoyl-CoA + NADPH + H(+) = (7Z,10Z,13Z,16Z,19Z)-docosapentaenoyl-CoA + NADP(+). It carries out the reaction (2E,8Z,11Z,14Z)-eicosatetraenoyl-CoA + NADPH + H(+) = (8Z,11Z,14Z)-eicosatrienoyl-CoA + NADP(+). The enzyme catalyses (2E)-hexadecenoyl-CoA + NADPH + H(+) = hexadecanoyl-CoA + NADP(+). Its pathway is lipid metabolism; fatty acid biosynthesis. The protein operates within lipid metabolism; sphingolipid metabolism. Involved in both the production of very long-chain fatty acids for sphingolipid synthesis and the degradation of the sphingosine moiety in sphingolipids through the sphingosine 1-phosphate metabolic pathway. Catalyzes the last of the four reactions of the long-chain fatty acids elongation cycle. This endoplasmic reticulum-bound enzymatic process, allows the addition of 2 carbons to the chain of long- and very long-chain fatty acids/VLCFAs per cycle. This enzyme reduces the trans-2,3-enoyl-CoA fatty acid intermediate to an acyl-CoA that can be further elongated by entering a new cycle of elongation. Thereby, it participates in the production of VLCFAs of different chain lengths that are involved in multiple biological processes as precursors of membrane lipids and lipid mediators. Catalyzes the saturation step of the sphingosine 1-phosphate metabolic pathway, the conversion of trans-2-hexadecenoyl-CoA to palmitoyl-CoA. The polypeptide is Very-long-chain enoyl-CoA reductase (TECR) (Homo sapiens (Human)).